Reading from the N-terminus, the 166-residue chain is Large ribosomal subunit protein uL10 (166 aa).

The protein belongs to the universal ribosomal protein uL10 family. As to quaternary structure, part of the ribosomal stalk of the 50S ribosomal subunit. The N-terminus interacts with L11 and the large rRNA to form the base of the stalk. The C-terminus forms an elongated spine to which L12 dimers bind in a sequential fashion forming a multimeric L10(L12)X complex.

In terms of biological role, forms part of the ribosomal stalk, playing a central role in the interaction of the ribosome with GTP-bound translation factors. The protein is Large ribosomal subunit protein uL10 of Phytoplasma australiense.